The primary structure comprises 313 residues: Glyoxylate/hydroxypyruvate reductase A HPR2 (313 aa).

Residues 152–155, 174–176, 230–232, and D256 each bind NADP(+); these read LGRI, SRT, and IGR. The active site involves R232. Residue E261 is part of the active site. H279 (proton donor) is an active-site residue. NADP(+) is bound at residue 279-281; it reads HVG.

The protein belongs to the D-isomer specific 2-hydroxyacid dehydrogenase family. GyaR subfamily. Homodimer.

The protein localises to the cytoplasm. It carries out the reaction glycolate + NADP(+) = glyoxylate + NADPH + H(+). It catalyses the reaction (R)-glycerate + NAD(+) = 3-hydroxypyruvate + NADH + H(+). The enzyme catalyses (R)-glycerate + NADP(+) = 3-hydroxypyruvate + NADPH + H(+). Strongly inhibited by oxalate. Functionally, catalyzes the NADPH-dependent reduction of glyoxylate and hydroxypyruvate (HP) into glycolate and glycerate in the cytoplasm, thus providing a cytosolic bypass to the photorespiratory core cycle. Mostly active in the presence of NADPH and hydroxypyruvate. This Arabidopsis thaliana (Mouse-ear cress) protein is Glyoxylate/hydroxypyruvate reductase A HPR2 (HPR2).